Reading from the N-terminus, the 411-residue chain is DNA polymerase IV (411 aa).

The region spanning 18–211 is the UmuC domain; sequence VVHVDMDCFY…LDVADLHGVG (194 aa). Residues D22 and D130 each coordinate Mg(2+). E131 is an active-site residue. Disordered stretches follow at residues 248–280 and 376–411; these read FHRR…GATE and GFSG…DEFT. Positions 253 to 274 are enriched in basic and acidic residues; it reads RGADSRPVEPRGKPKSLSRESS. The span at 384-402 shows a compositional bias: gly residues; sequence DGGGHEGGACGGAGRGSCG.

It belongs to the DNA polymerase type-Y family. Monomer. Mg(2+) is required as a cofactor.

It is found in the cytoplasm. It carries out the reaction DNA(n) + a 2'-deoxyribonucleoside 5'-triphosphate = DNA(n+1) + diphosphate. Its function is as follows. Poorly processive, error-prone DNA polymerase involved in untargeted mutagenesis. Copies undamaged DNA at stalled replication forks, which arise in vivo from mismatched or misaligned primer ends. These misaligned primers can be extended by PolIV. Exhibits no 3'-5' exonuclease (proofreading) activity. May be involved in translesional synthesis. The sequence is that of DNA polymerase IV from Halobacterium salinarum (strain ATCC 29341 / DSM 671 / R1).